The primary structure comprises 447 residues: tRNA-2-methylthio-N(6)-dimethylallyladenosine synthase (447 aa).

The MTTase N-terminal domain occupies 14-130; sequence KKVYIRTFGC…LPAMIANAGQ (117 aa). Residues cysteine 23, cysteine 59, cysteine 93, cysteine 166, cysteine 170, and cysteine 173 each coordinate [4Fe-4S] cluster. Residues 152–382 form the Radical SAM core domain; it reads RSGTISAFIP…IALQGSISGE (231 aa). The TRAM domain maps to 385–447; it reads AAEVGAVVEV…TPATLIGTPA (63 aa).

This sequence belongs to the methylthiotransferase family. MiaB subfamily. In terms of assembly, monomer. Requires [4Fe-4S] cluster as cofactor.

The protein localises to the cytoplasm. The enzyme catalyses N(6)-dimethylallyladenosine(37) in tRNA + (sulfur carrier)-SH + AH2 + 2 S-adenosyl-L-methionine = 2-methylsulfanyl-N(6)-dimethylallyladenosine(37) in tRNA + (sulfur carrier)-H + 5'-deoxyadenosine + L-methionine + A + S-adenosyl-L-homocysteine + 2 H(+). Its function is as follows. Catalyzes the methylthiolation of N6-(dimethylallyl)adenosine (i(6)A), leading to the formation of 2-methylthio-N6-(dimethylallyl)adenosine (ms(2)i(6)A) at position 37 in tRNAs that read codons beginning with uridine. The polypeptide is tRNA-2-methylthio-N(6)-dimethylallyladenosine synthase (Chlorobium phaeobacteroides (strain BS1)).